Here is a 310-residue protein sequence, read N- to C-terminus: Antiviral protein II/III (310 aa).

Residues 1 to 25 form the signal peptide; that stretch reads MKMKVLEVVGLAISIWLMLTPPASS. Disulfide bonds link Cys57/Cys284 and Cys106/Cys123. Tyr94 is a catalytic residue. Residues Tyr142, Glu197, and Arg200 contribute to the active site.

This sequence belongs to the ribosome-inactivating protein family. Type 1 RIP subfamily. As to expression, PAP-II is expressed in early summer leaves (at protein level). PAP-III is expressed in late summer leaves (at protein level).

It carries out the reaction Endohydrolysis of the N-glycosidic bond at one specific adenosine on the 28S rRNA.. Its function is as follows. Possesses antiviral potency. Inhibits viral infection of plants (tobacco mosaic virus). Inhibits protein synthesis in both prokaryotes and eukaryotes. The protein is Antiviral protein II/III (PAP2) of Phytolacca americana (American pokeweed).